The sequence spans 309 residues: Sulfate adenylyltransferase subunit 2 (309 aa).

The protein belongs to the PAPS reductase family. CysD subfamily. As to quaternary structure, heterodimer composed of CysD, the smaller subunit, and CysN.

It carries out the reaction sulfate + ATP + H(+) = adenosine 5'-phosphosulfate + diphosphate. It participates in sulfur metabolism; hydrogen sulfide biosynthesis; sulfite from sulfate: step 1/3. Functionally, with CysN forms the ATP sulfurylase (ATPS) that catalyzes the adenylation of sulfate producing adenosine 5'-phosphosulfate (APS) and diphosphate, the first enzymatic step in sulfur assimilation pathway. APS synthesis involves the formation of a high-energy phosphoric-sulfuric acid anhydride bond driven by GTP hydrolysis by CysN coupled to ATP hydrolysis by CysD. The chain is Sulfate adenylyltransferase subunit 2 from Mycolicibacterium gilvum (strain PYR-GCK) (Mycobacterium gilvum (strain PYR-GCK)).